We begin with the raw amino-acid sequence, 88 residues long: Cell division topological specificity factor (88 aa).

The protein belongs to the MinE family.

Prevents the cell division inhibition by proteins MinC and MinD at internal division sites while permitting inhibition at polar sites. This ensures cell division at the proper site by restricting the formation of a division septum at the midpoint of the long axis of the cell. The chain is Cell division topological specificity factor from Methylibium petroleiphilum (strain ATCC BAA-1232 / LMG 22953 / PM1).